Here is a 227-residue protein sequence, read N- to C-terminus: Pyridoxal 5'-phosphate synthase subunit PdxT (227 aa).

52–54 contacts L-glutamine; the sequence is GES. The active-site Nucleophile is C84. L-glutamine is bound by residues R118 and 149 to 150; that span reads IR. Residues H189 and E191 each act as charge relay system in the active site.

It belongs to the glutaminase PdxT/SNO family. In the presence of PdxS, forms a dodecamer of heterodimers. Only shows activity in the heterodimer.

It carries out the reaction aldehydo-D-ribose 5-phosphate + D-glyceraldehyde 3-phosphate + L-glutamine = pyridoxal 5'-phosphate + L-glutamate + phosphate + 3 H2O + H(+). The enzyme catalyses L-glutamine + H2O = L-glutamate + NH4(+). Its pathway is cofactor biosynthesis; pyridoxal 5'-phosphate biosynthesis. In terms of biological role, catalyzes the hydrolysis of glutamine to glutamate and ammonia as part of the biosynthesis of pyridoxal 5'-phosphate. The resulting ammonia molecule is channeled to the active site of PdxS. This chain is Pyridoxal 5'-phosphate synthase subunit PdxT, found in Renibacterium salmoninarum (strain ATCC 33209 / DSM 20767 / JCM 11484 / NBRC 15589 / NCIMB 2235).